The sequence spans 271 residues: Serine protease SP24D (271 aa).

Positions 1–22 (MTLADRVPLALAALAYLALVSG) are cleaved as a signal peptide. Positions 23–49 (VRFHLSEQNDVLPGGSQARRPFFQGAR) are cleaved as a propeptide — activation peptide. The 220-residue stretch at 50–269 (IVGGSVASEG…FVTWIQTTMR (220 aa)) folds into the Peptidase S1 domain. Cysteine 75 and cysteine 91 are oxidised to a cystine. Catalysis depends on charge relay system residues histidine 90 and aspartate 136. Cystine bridges form between cysteine 199-cysteine 211 and cysteine 221-cysteine 246. Serine 225 (charge relay system) is an active-site residue.

This sequence belongs to the peptidase S1 family. In terms of tissue distribution, highest level of adult expression is in the thorax.

The polypeptide is Serine protease SP24D (Sp24D) (Anopheles gambiae (African malaria mosquito)).